The sequence spans 351 residues: Polyribonucleotide 5'-hydroxyl-kinase TK1956 (351 aa).

34 to 41 lines the ATP pocket; it reads GGVDSGKS.

A divalent metal cation is required as a cofactor.

It catalyses the reaction a 5'-end dephospho-2'-deoxyribonucleoside-DNA + ATP = a 5'-end 5'-phospho-2'-deoxyribonucleoside-DNA + ADP + H(+). The enzyme catalyses a 5'-end dephospho-ribonucleoside-RNA + ATP = a 5'-end 5'-phospho-ribonucleoside-RNA + ADP + H(+). Its function is as follows. Polynucleotide kinase that can phosphorylate the 5'-hydroxyl groups of both single-stranded RNA (ssRNA) and single-stranded DNA (ssDNA). Exhibits a strong preference for ssRNA. The sequence is that of Polyribonucleotide 5'-hydroxyl-kinase TK1956 from Thermococcus kodakarensis (strain ATCC BAA-918 / JCM 12380 / KOD1) (Pyrococcus kodakaraensis (strain KOD1)).